The following is a 609-amino-acid chain: NADH-ubiquinone oxidoreductase chain 5 (609 aa).

Transmembrane regions (helical) follow at residues 3–23 (VINL…LPIV), 46–66 (AFMI…EMII), 90–110 (MIFV…SMWY), 115–135 (PFIN…MILV), 140–160 (LFQL…LIGW), 174–194 (AVLY…WFLI), 216–236 (LMGL…HPWL), 244–264 (TPVS…FLLI), 276–296 (MQTT…ICAL), 304–323 (IIAF…IGIN), 328–350 (AFLH…GSII), 368–388 (VLPF…GMPF), 410–432 (WALL…IMFF), 460–480 (LLLG…PTST), 485–505 (MPYY…ILAL), and 585–605 (GLIK…LMMI).

This sequence belongs to the complex I subunit 5 family.

The protein localises to the mitochondrion inner membrane. It carries out the reaction a ubiquinone + NADH + 5 H(+)(in) = a ubiquinol + NAD(+) + 4 H(+)(out). Functionally, core subunit of the mitochondrial membrane respiratory chain NADH dehydrogenase (Complex I) that is believed to belong to the minimal assembly required for catalysis. Complex I functions in the transfer of electrons from NADH to the respiratory chain. The immediate electron acceptor for the enzyme is believed to be ubiquinone. This Phoca vitulina (Harbor seal) protein is NADH-ubiquinone oxidoreductase chain 5 (MT-ND5).